Reading from the N-terminus, the 338-residue chain is Anthranilate phosphoribosyltransferase (338 aa).

5-phospho-alpha-D-ribose 1-diphosphate is bound by residues glycine 78, 81–82 (GD), threonine 86, 88–91 (NIST), 106–114 (KHGNRSVSS), and serine 118. Glycine 78 contributes to the anthranilate binding site. Serine 90 contacts Mg(2+). Asparagine 109 lines the anthranilate pocket. Anthranilate is bound at residue arginine 164. Residues aspartate 223 and glutamate 224 each coordinate Mg(2+).

The protein belongs to the anthranilate phosphoribosyltransferase family. In terms of assembly, homodimer. The cofactor is Mg(2+).

The enzyme catalyses N-(5-phospho-beta-D-ribosyl)anthranilate + diphosphate = 5-phospho-alpha-D-ribose 1-diphosphate + anthranilate. Its pathway is amino-acid biosynthesis; L-tryptophan biosynthesis; L-tryptophan from chorismate: step 2/5. Its function is as follows. Catalyzes the transfer of the phosphoribosyl group of 5-phosphorylribose-1-pyrophosphate (PRPP) to anthranilate to yield N-(5'-phosphoribosyl)-anthranilate (PRA). The sequence is that of Anthranilate phosphoribosyltransferase from Bacillus velezensis (strain DSM 23117 / BGSC 10A6 / LMG 26770 / FZB42) (Bacillus amyloliquefaciens subsp. plantarum).